Consider the following 480-residue polypeptide: Acetylxylan esterase (480 aa).

The N-terminal stretch at 1–19 is a signal peptide; that stretch reads MNRKLFMTGLLMLAMTMQA.

Belongs to the AB hydrolase superfamily.

It carries out the reaction Deacetylation of xylans and xylo-oligosaccharides.. It participates in glycan degradation; xylan degradation. Its function is as follows. Involved in degradation of plant cell wall polysaccharides. Is an acetyl esterase with broad substrate specificity, releasing acetic acid from acetylated xylo-oligosaccharides and acetylated xylan as well as xylose-tetraacetate, 4-O-methylumbelliferyl acetate, glucose-pentaacetate, and cephalosporin C. Appears to have greater activity on oligosaccharides than on polymeric substrates. Is also able to release acetic acid from xylo-oligosaccharides with 4-O-methylglucuronic acid side groups proximally located to O-acetyl esters. Preferentially targets xylo-oligosaccharides possessing three or more O-acetyl groups, but following their depletion it is active on the less acetylated portion of the substrate. The protein is Acetylxylan esterase of Xylanibacter ruminicola (strain ATCC 19189 / DSM 19721 / CIP 105475 / JCM 8958 / 23) (Prevotella ruminicola).